A 237-amino-acid polypeptide reads, in one-letter code: Phosphoribosylaminoimidazole-succinocarboxamide synthase (237 aa).

The protein belongs to the SAICAR synthetase family.

It catalyses the reaction 5-amino-1-(5-phospho-D-ribosyl)imidazole-4-carboxylate + L-aspartate + ATP = (2S)-2-[5-amino-1-(5-phospho-beta-D-ribosyl)imidazole-4-carboxamido]succinate + ADP + phosphate + 2 H(+). Its pathway is purine metabolism; IMP biosynthesis via de novo pathway; 5-amino-1-(5-phospho-D-ribosyl)imidazole-4-carboxamide from 5-amino-1-(5-phospho-D-ribosyl)imidazole-4-carboxylate: step 1/2. This is Phosphoribosylaminoimidazole-succinocarboxamide synthase from Pectobacterium atrosepticum (strain SCRI 1043 / ATCC BAA-672) (Erwinia carotovora subsp. atroseptica).